We begin with the raw amino-acid sequence, 87 residues long: CRISPR-associated endoribonuclease Cas2 (87 aa).

Mg(2+) is bound at residue Asp-8.

The protein belongs to the CRISPR-associated endoribonuclease Cas2 protein family. Homodimer, forms a heterotetramer with a Cas1 homodimer. Mg(2+) serves as cofactor.

Functionally, CRISPR (clustered regularly interspaced short palindromic repeat), is an adaptive immune system that provides protection against mobile genetic elements (viruses, transposable elements and conjugative plasmids). CRISPR clusters contain sequences complementary to antecedent mobile elements and target invading nucleic acids. CRISPR clusters are transcribed and processed into CRISPR RNA (crRNA). Functions as a ssRNA-specific endoribonuclease. Involved in the integration of spacer DNA into the CRISPR cassette. This is CRISPR-associated endoribonuclease Cas2 from Frankia alni (strain DSM 45986 / CECT 9034 / ACN14a).